An 83-amino-acid polypeptide reads, in one-letter code: Conotoxin p21a (83 aa).

Residues Pro24 and Pro43 each carry the 4-hydroxyproline; partial modification. Residue His83 is modified to Histidine amide.

May form a non-covalent dimer. Contains 5 disulfide bonds. As to expression, expressed by the venom duct.

Its subcellular location is the secreted. The polypeptide is Conotoxin p21a (Conus purpurascens (Purple cone)).